Consider the following 296-residue polypeptide: Small ribosomal subunit protein uS2 (296 aa).

Disordered regions lie at residues 1–24 and 270–296; these read MNTK…TQSQ and HELK…EASQ.

Belongs to the universal ribosomal protein uS2 family.

The protein is Small ribosomal subunit protein uS2 of Mycoplasmopsis synoviae (strain 53) (Mycoplasma synoviae).